We begin with the raw amino-acid sequence, 46 residues long: Phoratoxin (46 aa).

Disulfide bonds link Cys-3–Cys-40, Cys-4–Cys-32, and Cys-16–Cys-26. His-46 carries the post-translational modification Blocked carboxyl end (His).

Belongs to the plant thionin (TC 1.C.44) family.

It is found in the secreted. Thionins are small plant proteins which are toxic to animal cells. They seem to exert their toxic effect at the level of the cell membrane. Their precise function is not known. This chain is Phoratoxin, found in Phoradendron leucarpum subsp. tomentosum (California mistletoe).